Reading from the N-terminus, the 146-residue chain is Hemoglobin subunit beta-1 (146 aa).

A Globin domain is found at 2–146 (HWTAEEKQLI…VAHALARRYH (145 aa)). 2 residues coordinate heme b: histidine 63 and histidine 92.

The protein belongs to the globin family. As to quaternary structure, heterotetramer of two alpha chains and two beta chains. Red blood cells.

In terms of biological role, involved in oxygen transport from the lung to the various peripheral tissues. The chain is Hemoglobin subunit beta-1 (HBB1) from Iguana iguana (Common iguana).